Reading from the N-terminus, the 92-residue chain is Protein S100-A12 (92 aa).

2 EF-hand domains span residues 13 to 48 (NIFH…LKNT) and 49 to 84 (KDQG…VLIT). Histidine 16 serves as a coordination point for Cu cation. Residue histidine 16 participates in Zn(2+) binding. Ca(2+) is bound by residues serine 19 and histidine 24. Aspartate 26 is a binding site for Cu cation. Aspartate 26 serves as a coordination point for Zn(2+). Residues threonine 27 and glutamate 32 each contribute to the Ca(2+) site. Positions 38 to 53 (TKELPNTLKNTKDQGT) are hinge domain. Residues aspartate 62, asparagine 64, aspartate 66, glutamine 68, and glutamate 73 each contribute to the Ca(2+) site. Histidine 86 and histidine 90 together coordinate Cu cation. Zn(2+) contacts are provided by histidine 86 and histidine 90.

The protein belongs to the S-100 family. As to quaternary structure, homodimer. Homooligomer (tetramer or hexamer) in the presence of calcium, zinc and copper ions. Interacts with AGER and both calcium and zinc are essential for the interaction. Interacts with CACYBP in a calcium-dependent manner. In terms of tissue distribution, found essentially in granulocytes with small amounts found in lymphocytes.

The protein localises to the secreted. Its subcellular location is the cytoplasm. It is found in the cytoskeleton. It localises to the cell membrane. In terms of biological role, S100A12 is a calcium-, zinc- and copper-binding protein which plays a prominent role in the regulation of inflammatory processes and immune response. Its pro-inflammatory activity involves recruitment of leukocytes, promotion of cytokine and chemokine production, and regulation of leukocyte adhesion and migration. Acts as an alarmin or a danger associated molecular pattern (DAMP) molecule and stimulates innate immune cells via binding to receptor for advanced glycation endproducts (AGER). Binding to AGER activates the MAP-kinase and NF-kappa-B signaling pathways leading to production of pro-inflammatory cytokines and up-regulation of cell adhesion molecules ICAM1 and VCAM1. Acts as a monocyte and mast cell chemoattractant. Can stimulate mast cell degranulation and activation which generates chemokines, histamine and cytokines inducing further leukocyte recruitment to the sites of inflammation. Can inhibit the activity of matrix metalloproteinases; MMP2, MMP3 and MMP9 by chelating Zn(2+) from their active sites. The chain is Protein S100-A12 (S100A12) from Sus scrofa (Pig).